The primary structure comprises 284 residues: Asialoglycoprotein receptor 1 (284 aa).

Over residues 1 to 18 (MTKDYQDFQHLDNDNDHH) the composition is skewed to basic and acidic residues. Residues 1–25 (MTKDYQDFQHLDNDNDHHQLRRGPP) are disordered. At 1–39 (MTKDYQDFQHLDNDNDHHQLRRGPPPTPRLLQRLCSGSR) the chain is on the cytoplasmic side. Residues 5–8 (YQDF) carry the Endocytosis signal motif. Cys-35 carries the S-palmitoyl cysteine lipid modification. Residues 40–60 (LLLLSSSLSILLLVVVCVITS) form a helical; Signal-anchor for type II membrane protein membrane-spanning segment. The stretch at 59-117 (TSQNSQLREDLLALRQNFSNLTVSTEDQVKALSTQGSSVGRKMKLVESKLEKQQKDLTE) forms a coiled coil. The Extracellular portion of the chain corresponds to 61-284 (QNSQLREDLL…VCETKLDKAN (224 aa)). N-linked (GlcNAc...) asparagine glycosylation is found at Asn-75, Asn-78, and Asn-146. Intrachain disulfides connect Cys-153-Cys-164, Cys-181-Cys-276, and Cys-254-Cys-268. The C-type lectin domain maps to 160-277 (YEGSCYWFSS…CRRPYRWVCE (118 aa)). Ca(2+) is bound by residues Val-190, Glu-196, Asp-215, Gln-239, Asp-241, Glu-252, Asp-253, Asn-264, Asp-265, and Glu-277.

Interacts with LASS2. Phosphorylated on a cytoplasmic Ser residue. Expressed exclusively in hepatic parenchymal cells.

It is found in the membrane. Its function is as follows. Mediates the endocytosis of plasma glycoproteins to which the terminal sialic acid residue on their complex carbohydrate moieties has been removed. The receptor recognizes terminal galactose and N-acetylgalactosamine units. After ligand binding to the receptor, the resulting complex is internalized and transported to a sorting organelle, where receptor and ligand are disassociated. The receptor then returns to the cell membrane surface. The polypeptide is Asialoglycoprotein receptor 1 (Asgr1) (Mus musculus (Mouse)).